The following is a 166-amino-acid chain: Ureidoglycolate lyase (166 aa).

It belongs to the ureidoglycolate lyase family. As to quaternary structure, homodimer. Ni(2+) is required as a cofactor.

It carries out the reaction (S)-ureidoglycolate = urea + glyoxylate. The protein operates within nitrogen metabolism; (S)-allantoin degradation. Its function is as follows. Catalyzes the catabolism of the allantoin degradation intermediate (S)-ureidoglycolate, generating urea and glyoxylate. Involved in the utilization of allantoin as nitrogen source. The sequence is that of Ureidoglycolate lyase from Azotobacter vinelandii (strain DJ / ATCC BAA-1303).